Consider the following 374-residue polypeptide: Dihydroorotate dehydrogenase (quinone) (374 aa).

Residues 78–82 (AGFDK) and threonine 102 each bind FMN. Lysine 82 provides a ligand contact to substrate. 127–131 (NRMGF) contacts substrate. FMN is bound by residues asparagine 159 and asparagine 192. Asparagine 192 provides a ligand contact to substrate. Catalysis depends on serine 195, which acts as the Nucleophile. Asparagine 197 contacts substrate. Residues lysine 230 and threonine 258 each coordinate FMN. A substrate-binding site is contributed by 259 to 260 (NT). Residues glycine 287, glycine 316, and 337–338 (YT) contribute to the FMN site.

The protein belongs to the dihydroorotate dehydrogenase family. Type 2 subfamily. Monomer. Requires FMN as cofactor.

The protein localises to the cell membrane. It catalyses the reaction (S)-dihydroorotate + a quinone = orotate + a quinol. The protein operates within pyrimidine metabolism; UMP biosynthesis via de novo pathway; orotate from (S)-dihydroorotate (quinone route): step 1/1. Functionally, catalyzes the conversion of dihydroorotate to orotate with quinone as electron acceptor. The polypeptide is Dihydroorotate dehydrogenase (quinone) (Acaryochloris marina (strain MBIC 11017)).